Consider the following 608-residue polypeptide: Chaperone protein HtpG (608 aa).

The segment at 1 to 332 (MQFQTEVNQL…VEDLPLNVSR (332 aa)) is a; substrate-binding. The b stretch occupies residues 333 to 536 (EILQENQILK…KNKPDFAMQQ (204 aa)). The interval 537–608 (LLKQMGQEQN…LTKIINKAFS (72 aa)) is c.

Belongs to the heat shock protein 90 family. Homodimer.

The protein resides in the cytoplasm. In terms of biological role, molecular chaperone. Has ATPase activity. The chain is Chaperone protein HtpG from Campylobacter jejuni subsp. jejuni serotype O:2 (strain ATCC 700819 / NCTC 11168).